The primary structure comprises 341 residues: RNA 3'-terminal phosphate cyclase (341 aa).

ATP contacts are provided by residues Gln102 and 283 to 287 (HLADQ). The active-site Tele-AMP-histidine intermediate is His308.

This sequence belongs to the RNA 3'-terminal cyclase family. Type 1 subfamily.

The protein localises to the cytoplasm. The enzyme catalyses a 3'-end 3'-phospho-ribonucleotide-RNA + ATP = a 3'-end 2',3'-cyclophospho-ribonucleotide-RNA + AMP + diphosphate. Catalyzes the conversion of 3'-phosphate to a 2',3'-cyclic phosphodiester at the end of RNA. The mechanism of action of the enzyme occurs in 3 steps: (A) adenylation of the enzyme by ATP; (B) transfer of adenylate to an RNA-N3'P to produce RNA-N3'PP5'A; (C) and attack of the adjacent 2'-hydroxyl on the 3'-phosphorus in the diester linkage to produce the cyclic end product. The biological role of this enzyme is unknown but it is likely to function in some aspects of cellular RNA processing. This Pseudomonas aeruginosa (strain UCBPP-PA14) protein is RNA 3'-terminal phosphate cyclase.